The primary structure comprises 348 residues: Putative zinc metalloprotease HP_0258 (348 aa).

A Zn(2+)-binding site is contributed by His-16. Glu-17 is an active-site residue. A Zn(2+)-binding site is contributed by His-20. A run of 5 helical transmembrane segments spans residues 43–63 (CFFKLFGTQFALSLIPLGGYV), 93–113 (WILFGGAFFNFLFAILVYFFL), 247–267 (LIMGSSSVKELSGVVGIVGAL), 275–295 (MLLLFGAFLSINLGILNLLPI), and 324–344 (LWLAGVGFLVFIMFLGLFNDL). One can recognise a PDZ domain in the interval 106–175 (AILVYFFLAL…GELVLEIERN (70 aa)).

Belongs to the peptidase M50B family. It depends on Zn(2+) as a cofactor.

It is found in the cell inner membrane. This chain is Putative zinc metalloprotease HP_0258, found in Helicobacter pylori (strain ATCC 700392 / 26695) (Campylobacter pylori).